The following is a 311-amino-acid chain: Beta-lactamase (311 aa).

Positions M1–A36 form a signal peptide, tat-type signal. S86 serves as the catalytic Acyl-ester intermediate. K252–G254 serves as a coordination point for substrate.

This sequence belongs to the class-A beta-lactamase family. In terms of processing, predicted to be exported by the Tat system. The position of the signal peptide cleavage has not been experimentally proven.

The catalysed reaction is a beta-lactam + H2O = a substituted beta-amino acid. Hydrolyzes benzylpenicillin and cloxacillin (at 10% of the rate of benzylpenicillin). The chain is Beta-lactamase (bla) from Streptomyces cellulosae.